Consider the following 227-residue polypeptide: MAHAAQVGLQDATSPIMEELIIFHDHALMIIFLICFLVLYALFLTLTTKLTSTNISDAQEMETVWTILPAIILVLIALPSLRILYMTDEINDPSFTIKSIGHQWYWTYEYTDYGGLIFNSYMLPPLFLEPGDLRLLDVDNRVVLPVEAPVRMMITSQDVLHSWAVPTLGLKTDAIPGRLNQTTFTATRPGLYYGQCSEICGANHSFMPIVLELIPLKIFEMGPVFTL.

Topologically, residues 1–14 (MAHAAQVGLQDATS) are mitochondrial intermembrane. A helical transmembrane segment spans residues 15 to 45 (PIMEELIIFHDHALMIIFLICFLVLYALFLT). Over 46-59 (LTTKLTSTNISDAQ) the chain is Mitochondrial matrix. Residues 60–87 (EMETVWTILPAIILVLIALPSLRILYMT) form a helical membrane-spanning segment. At 88-227 (DEINDPSFTI…IFEMGPVFTL (140 aa)) the chain is on the mitochondrial intermembrane side. The Cu cation site is built by histidine 161, cysteine 196, glutamate 198, cysteine 200, histidine 204, and methionine 207. Glutamate 198 lines the Mg(2+) pocket.

It belongs to the cytochrome c oxidase subunit 2 family. In terms of assembly, component of the cytochrome c oxidase (complex IV, CIV), a multisubunit enzyme composed of 14 subunits. The complex is composed of a catalytic core of 3 subunits MT-CO1, MT-CO2 and MT-CO3, encoded in the mitochondrial DNA, and 11 supernumerary subunits COX4I, COX5A, COX5B, COX6A, COX6B, COX6C, COX7A, COX7B, COX7C, COX8 and NDUFA4, which are encoded in the nuclear genome. The complex exists as a monomer or a dimer and forms supercomplexes (SCs) in the inner mitochondrial membrane with NADH-ubiquinone oxidoreductase (complex I, CI) and ubiquinol-cytochrome c oxidoreductase (cytochrome b-c1 complex, complex III, CIII), resulting in different assemblies (supercomplex SCI(1)III(2)IV(1) and megacomplex MCI(2)III(2)IV(2)). Found in a complex with TMEM177, COA6, COX18, COX20, SCO1 and SCO2. Interacts with TMEM177 in a COX20-dependent manner. Interacts with COX20. Interacts with COX16. It depends on Cu cation as a cofactor.

It is found in the mitochondrion inner membrane. It carries out the reaction 4 Fe(II)-[cytochrome c] + O2 + 8 H(+)(in) = 4 Fe(III)-[cytochrome c] + 2 H2O + 4 H(+)(out). Its function is as follows. Component of the cytochrome c oxidase, the last enzyme in the mitochondrial electron transport chain which drives oxidative phosphorylation. The respiratory chain contains 3 multisubunit complexes succinate dehydrogenase (complex II, CII), ubiquinol-cytochrome c oxidoreductase (cytochrome b-c1 complex, complex III, CIII) and cytochrome c oxidase (complex IV, CIV), that cooperate to transfer electrons derived from NADH and succinate to molecular oxygen, creating an electrochemical gradient over the inner membrane that drives transmembrane transport and the ATP synthase. Cytochrome c oxidase is the component of the respiratory chain that catalyzes the reduction of oxygen to water. Electrons originating from reduced cytochrome c in the intermembrane space (IMS) are transferred via the dinuclear copper A center (CU(A)) of subunit 2 and heme A of subunit 1 to the active site in subunit 1, a binuclear center (BNC) formed by heme A3 and copper B (CU(B)). The BNC reduces molecular oxygen to 2 water molecules using 4 electrons from cytochrome c in the IMS and 4 protons from the mitochondrial matrix. In Gorilla gorilla beringei (Mountain gorilla), this protein is Cytochrome c oxidase subunit 2 (MT-CO2).